We begin with the raw amino-acid sequence, 64 residues long: uncharacterized protein (64 aa).

Residues 30–52 (FYAIFEMLFWPLVSLISVGLLGE) traverse the membrane as a helical segment.

Its subcellular location is the membrane. This is an uncharacterized protein from Archaeoglobus fulgidus (strain ATCC 49558 / DSM 4304 / JCM 9628 / NBRC 100126 / VC-16).